The primary structure comprises 175 residues: Endothelial cell-specific chemotaxis regulator (175 aa).

The N-terminal stretch at 1-24 (MGTVRAARLCGAILGFLLLQGAFG) is a signal peptide. The Extracellular segment spans residues 25 to 91 (KPSLITEPLS…PSPTSETVLT (67 aa)). Positions 33–66 (LSSNTGNSSSSEPRSSSSPASAGTPDTSQNITPI) are disordered. The span at 34–60 (SSNTGNSSSSEPRSSSSPASAGTPDTS) shows a compositional bias: low complexity. A helical transmembrane segment spans residues 92–112 (VAAFGVISFIVILVVVVIILV). The Cytoplasmic portion of the chain corresponds to 113–175 (SVVSLRFKCR…KGCPTAEKVI (63 aa)). Residues 124–145 (NKESEDPQKPGSSGLSESCSTA) form a disordered region. A compositionally biased stretch (polar residues) spans 133 to 145 (PGSSGLSESCSTA). Ser-165 is modified (phosphoserine).

Belongs to the ECSCR family. As to quaternary structure, interacts with FLNA. Interacts with the 20S proteasome subunit PSMA7. May be heavily O-glycosylated.

It localises to the cell membrane. The protein localises to the cytoplasm. Functionally, regulates endothelial chemotaxis and tube formation. Has a role in angiogenesis and apoptosis via modulation of the actin cytoskeleton and facilitation of proteasomal degradation of the apoptosis inhibitors BIRC3/IAP1 and BIRC2/IAP2. This is Endothelial cell-specific chemotaxis regulator (ECSCR) from Canis lupus familiaris (Dog).